A 135-amino-acid chain; its full sequence is Immunity protein RhsIA (135 aa).

Residues 58–77 (RKQGRQISLSCGEPPEYSPD) are disordered.

Its function is as follows. Immunity component of a toxin-immunity protein module, which functions as a cellular contact-dependent growth inhibition (CDI) system. Specifically inhibits its cognate toxin RhsA. Cell contact is necessary for growth inhibition. This Dickeya dadantii (strain 3937) (Erwinia chrysanthemi (strain 3937)) protein is Immunity protein RhsIA (rhsIA).